The following is a 477-amino-acid chain: Argininosuccinate lyase (477 aa).

This sequence belongs to the lyase 1 family. Argininosuccinate lyase subfamily.

Its subcellular location is the cytoplasm. The catalysed reaction is 2-(N(omega)-L-arginino)succinate = fumarate + L-arginine. It functions in the pathway amino-acid biosynthesis; L-arginine biosynthesis; L-arginine from L-ornithine and carbamoyl phosphate: step 3/3. In Streptomyces avermitilis (strain ATCC 31267 / DSM 46492 / JCM 5070 / NBRC 14893 / NCIMB 12804 / NRRL 8165 / MA-4680), this protein is Argininosuccinate lyase.